We begin with the raw amino-acid sequence, 141 residues long: MASFQCDIVSAEKAIFSGSAEQLIAAGVSGDLGILRGHAPLLTELKPGPVRVMREGGEEEVYYVTGGFLEVQPDVVSVLADTATRAHDLDEAAAEEARQEALKAMGDKQSDLDYTRAAAELAEAVAQLRTIQQLREKGSRR.

The protein belongs to the ATPase epsilon chain family. As to quaternary structure, F-type ATPases have 2 components, CF(1) - the catalytic core - and CF(0) - the membrane proton channel. CF(1) has five subunits: alpha(3), beta(3), gamma(1), delta(1), epsilon(1). CF(0) has three main subunits: a, b and c.

The protein localises to the cell inner membrane. Functionally, produces ATP from ADP in the presence of a proton gradient across the membrane. The sequence is that of ATP synthase epsilon chain from Chromohalobacter salexigens (strain ATCC BAA-138 / DSM 3043 / CIP 106854 / NCIMB 13768 / 1H11).